Reading from the N-terminus, the 610-residue chain is Zinc metalloproteinase-disintegrin-like brevilysin H6 (610 aa).

The signal sequence occupies residues 1–20 (MIQVLLVTICLAAFPYQGSS). A propeptide spanning residues 21–191 (IILESGNVND…ASQLNLTPEQ (171 aa)) is cleaved from the precursor. Residue Q192 is modified to Pyrrolidone carboxylic acid. A Peptidase M12B domain is found at 198 to 394 (RFVELVLVAD…HNPECIVNEP (197 aa)). Residues E201 and D285 each coordinate Ca(2+). 4 disulfides stabilise this stretch: C309/C389, C349/C373, C351/C356, and C373/C378. Residue H334 participates in Zn(2+) binding. E335 is an active-site residue. 2 residues coordinate Zn(2+): H338 and H344. N-linked (GlcNAc...) asparagine glycosylation occurs at N372. Residues C389, N392, V404, N407, L409, E411, E414, and D417 each coordinate Ca(2+). A Disintegrin domain is found at 402 to 488 (PPVCGNELLE…ECPADVFHKN (87 aa)). Intrachain disulfides connect C405/C424, C405/C434, C416/C429, C416/C434, C418/C424, C428/C451, C442/C448, C447/C473, C460/C480, C467/C492, C467/C499, C492/C504, C499/C504, C511/C526, C511/C561, C526/C572, C539/C549, C549/C556, C556/C598, C561/C572, C592/C603, and C598/C603. The D/ECD-tripeptide signature appears at 466-468 (ECD). Ca(2+) contacts are provided by D468, P469, E471, D483, and V484.

This sequence belongs to the venom metalloproteinase (M12B) family. P-III subfamily. P-IIIb sub-subfamily. Monomer. The cofactor is Zn(2+). In the absence of calcium ions, is autocatalytically degraded giving 29 (p29K) and 45 kDa (p45K) fragments. In presence of calcium ions, the p45K is not detected. As to expression, expressed by the venom gland.

Its subcellular location is the secreted. Its activity is regulated as follows. Inhibited by chelating agents. Calcium ions enhance its activity, they also suppress autoproteolysis, and contribute to the stability of the enzyme against pH, heating, urea and cysteine. In terms of biological role, shows weak hemorrhagic activity. Rapidly degrades the alpha-chain of fibrinogen (FGA). In Gloydius brevicauda (Korean slamosa snake), this protein is Zinc metalloproteinase-disintegrin-like brevilysin H6.